Here is a 757-residue protein sequence, read N- to C-terminus: Dolichyl-diphosphooligosaccharide--protein glycosyltransferase subunit stt-3 (757 aa).

Residues 1 to 13 (MTSTTAARTASSR) lie on the Cytoplasmic side of the membrane. A helical transmembrane segment spans residues 14–34 (VGATTLLTIVVLALAWFVGFA). At 35 to 121 (SRLFAIVRFE…VHIREVCVFL (87 aa)) the chain is on the lumenal side. Residues 49-51 (EFD) carry the DXD motif 1 motif. Asp-51 provides a ligand contact to Mn(2+). The chain crosses the membrane as a helical span at residues 122-140 (APTFSGLTAIATYLLTKEL). Residues 141–142 (WS) are Cytoplasmic-facing. A helical membrane pass occupies residues 143–160 (PGAGLFAACFIAISPGYT). At 161-171 (SRSVAGSYDNE) the chain is on the lumenal side. 2 residues coordinate Mn(2+): Asp-169 and Glu-171. The DXD motif 2 motif lies at 169-171 (DNE). A helical membrane pass occupies residues 172–191 (GIAIFALQFTYYLWVKSLKT). Over 192–193 (GS) the chain is Cytoplasmic. Residues 194-208 (IMWASLCALSYFYMV) form a helical membrane-spanning segment. The Lumenal segment spans residues 209 to 210 (SA). A run of 2 helical transmembrane segments spans residues 211 to 235 (WGGYVFIINLIPLHALALIIMGRYS) and 236 to 261 (SRLFVSYTSFYCLATILSMQVPFVGF). Residues 262-269 (QPVRTSEH) lie on the Lumenal side of the membrane. Residues 270–289 (MPAFGVFGLLQIVALMHYAR) form a helical membrane-spanning segment. Residues 290–299 (NRITRQQFMT) are Cytoplasmic-facing. Residues 300–320 (LFVGGLTILGALSVVVYFALV) traverse the membrane as a helical segment. Residues 321–358 (WGGYVAPFSGRFYSLWDTGYAKIHIPIIASVSEHQPTT) are Lumenal-facing. The SVSE motif signature appears at 350–353 (SVSE). A helical transmembrane segment spans residues 359–381 (WVSFFFDLHITAAVFPVGLWYCI). Residues 382–387 (KKVNDE) lie on the Cytoplasmic side of the membrane. The helical transmembrane segment at 388–404 (RVFIILYAVSAVYFAGV) threads the bilayer. The Lumenal segment spans residues 405 to 408 (MVRL). Arg-407 lines the dolichyl diphosphooligosaccharide pocket. The chain crosses the membrane as a helical span at residues 409–430 (MLTLTPAVCVLAGIGFSYTFEK). Residues 431 to 469 (YLKDEETKERSSSQSGTTKDEKLYDKAAKNVKSRNANDG) lie on the Cytoplasmic side of the membrane. A helical transmembrane segment spans residues 470-495 (DESGVSSNVRTIISIILVIFLLMFVV). Topologically, residues 496–757 (HATYVTSNAY…IRPAPTASKA (262 aa)) are lumenal. Residues 547-549 (WWD) are interacts with target acceptor peptide in protein substrate. Residues 547–551 (WWDYG) carry the WWDYG motif motif. Tyr-552 serves as a coordination point for dolichyl diphosphooligosaccharide. N-linked (GlcNAc...) asparagine glycans are attached at residues Asn-559 and Asn-566. Residue Asn-570 is glycosylated (N-linked (GlcNAc...) (high mannose) asparagine). A glycan (N-linked (GlcNAc...) asparagine) is linked at Asn-584. The DK motif signature appears at 614–621 (DINKFLWM). The segment at 721-757 (RPTVKSEEATIPIKGKKATQGKNKKGVIRPAPTASKA) is disordered. Residues 734-747 (KGKKATQGKNKKGV) are compositionally biased toward basic residues.

This sequence belongs to the STT3 family. In terms of assembly, component of the oligosaccharyltransferase (OST) complex. It depends on Mg(2+) as a cofactor. Requires Mn(2+) as cofactor.

It localises to the endoplasmic reticulum membrane. It catalyses the reaction a di-trans,poly-cis-dolichyl diphosphooligosaccharide + L-asparaginyl-[protein] = N(4)-(oligosaccharide-(1-&gt;4)-N-acetyl-beta-D-glucosaminyl-(1-&gt;4)-N-acetyl-beta-D-glucosaminyl)-L-asparaginyl-[protein] + a di-trans,poly-cis-dolichyl diphosphate + H(+). The protein operates within protein modification; protein glycosylation. Catalytic subunit of the oligosaccharyl transferase (OST) complex that catalyzes the initial transfer of a defined glycan (Glc(3)Man(9)GlcNAc(2) in eukaryotes) from the lipid carrier dolichol-pyrophosphate to an asparagine residue within an Asn-X-Ser/Thr consensus motif in nascent polypeptide chains, the first step in protein N-glycosylation. N-glycosylation occurs cotranslationally and the complex associates with the Sec61 complex at the channel-forming translocon complex that mediates protein translocation across the endoplasmic reticulum (ER). All subunits are required for a maximal enzyme activity. This subunit contains the active site and the acceptor peptide and donor lipid-linked oligosaccharide (LLO) binding pockets. The chain is Dolichyl-diphosphooligosaccharide--protein glycosyltransferase subunit stt-3 from Caenorhabditis elegans.